We begin with the raw amino-acid sequence, 468 residues long: Tubulin gamma chain (468 aa).

A GTP-binding site is contributed by 142–148 (AGGTGSG).

It belongs to the tubulin family.

It localises to the cytoplasm. The protein resides in the cytoskeleton. It is found in the microtubule organizing center. Functionally, tubulin is the major constituent of microtubules. The gamma chain is found at microtubule organizing centers (MTOC) such as the spindle poles, suggesting that it is involved in the minus-end nucleation of microtubule assembly. This is Tubulin gamma chain (TUBG) from Chlamydomonas reinhardtii (Chlamydomonas smithii).